A 241-amino-acid polypeptide reads, in one-letter code: Small ribosomal subunit protein uS5 (241 aa).

The tract at residues 1-53 (MSDNEKETQVAEETQNTQAAAESNNEDRKSRRGQRGEGRRGERRNRREESHEN) is disordered. Residues 11-22 (AEETQNTQAAAE) show a composition bias toward low complexity. A compositionally biased stretch (basic and acidic residues) spans 25-53 (NEDRKSRRGQRGEGRRGERRNRREESHEN). The region spanning 55–118 (MLDRVVTINR…LDAKKHMFTV (64 aa)) is the S5 DRBM domain.

It belongs to the universal ribosomal protein uS5 family. Part of the 30S ribosomal subunit. Contacts proteins S4 and S8.

Functionally, with S4 and S12 plays an important role in translational accuracy. Located at the back of the 30S subunit body where it stabilizes the conformation of the head with respect to the body. The chain is Small ribosomal subunit protein uS5 from Bifidobacterium adolescentis (strain ATCC 15703 / DSM 20083 / NCTC 11814 / E194a).